Here is a 164-residue protein sequence, read N- to C-terminus: Phosphopantetheine adenylyltransferase (164 aa).

Thr-10 is a substrate binding site. Residues 10–11 (TF) and His-18 contribute to the ATP site. Residues Lys-42, Thr-79, and Arg-93 each contribute to the substrate site. Residues 94–96 (GLR), Glu-104, and 129–135 (NQIISSR) each bind ATP.

The protein belongs to the bacterial CoaD family. In terms of assembly, homohexamer. Mg(2+) serves as cofactor.

It localises to the cytoplasm. The enzyme catalyses (R)-4'-phosphopantetheine + ATP + H(+) = 3'-dephospho-CoA + diphosphate. It participates in cofactor biosynthesis; coenzyme A biosynthesis; CoA from (R)-pantothenate: step 4/5. In terms of biological role, reversibly transfers an adenylyl group from ATP to 4'-phosphopantetheine, yielding dephospho-CoA (dPCoA) and pyrophosphate. The sequence is that of Phosphopantetheine adenylyltransferase from Pelagibacter ubique (strain HTCC1062).